The primary structure comprises 363 residues: Aminopyrrolnitrin oxygenase PrnD (363 aa).

A Rieske domain is found at 29–137; the sequence is WYVAMRSNEL…TAERYGYVWV (109 aa). [2Fe-2S] cluster-binding residues include Cys-69, His-71, Cys-88, and His-91.

As to quaternary structure, homodimer. [2Fe-2S] cluster is required as a cofactor. The cofactor is Fe cation. Requires FMN as cofactor.

It carries out the reaction aminopyrrolnitrin + NADPH + 2 O2 + H(+) = pyrrolnitrin + NADP(+) + 2 H2O. Its pathway is antibiotic biosynthesis. Its function is as follows. Involved in the biosynthesis of the antifungal antibiotic pyrrolnitrin (PRN). Catalyzes the oxidation of the amino group of aminopyrrolnitrin (APRN) to a nitro group to form PRN. It has high substrate specificity toward physiological substrate aminopyrrolnitrin, p-aminobenzylamine (pABA), p-aminobenzyl alcohol, and p-aminophenyl alanine. The chain is Aminopyrrolnitrin oxygenase PrnD (prnD) from Pseudomonas fluorescens.